Here is a 333-residue protein sequence, read N- to C-terminus: NADH-quinone oxidoreductase subunit H (333 aa).

8 helical membrane-spanning segments follow: residues 17–37 (VIQA…MSFI), 91–111 (VAMA…TLGV), 116–136 (IGLL…LFGG), 156–176 (ISYE…AGSF), 188–208 (MWFI…GVAV), 244–264 (YVNI…GWLA), 272–292 (FIPP…MFVL), and 310–330 (WKVC…VILM).

Belongs to the complex I subunit 1 family. In terms of assembly, NDH-1 is composed of 14 different subunits. Subunits NuoA, H, J, K, L, M, N constitute the membrane sector of the complex.

Its subcellular location is the cell inner membrane. The enzyme catalyses a quinone + NADH + 5 H(+)(in) = a quinol + NAD(+) + 4 H(+)(out). Functionally, NDH-1 shuttles electrons from NADH, via FMN and iron-sulfur (Fe-S) centers, to quinones in the respiratory chain. The immediate electron acceptor for the enzyme in this species is believed to be ubiquinone. Couples the redox reaction to proton translocation (for every two electrons transferred, four hydrogen ions are translocated across the cytoplasmic membrane), and thus conserves the redox energy in a proton gradient. This subunit may bind ubiquinone. The polypeptide is NADH-quinone oxidoreductase subunit H (Acinetobacter baylyi (strain ATCC 33305 / BD413 / ADP1)).